The sequence spans 368 residues: (3S,6E)-nerolidol synthase (368 aa).

3 residues coordinate Mg(2+): Asp91, Asn228, and Ser232. The DDXXE motif signature appears at 91-95 (DDLLE).

It belongs to the terpene synthase family. Requires Mg(2+) as cofactor. The cofactor is Mn(2+).

The catalysed reaction is (2E,6E)-farnesyl diphosphate + H2O = (3S,6E)-nerolidol + diphosphate. It carries out the reaction (2E)-geranyl diphosphate + H2O = (S)-linalool + diphosphate. The protein operates within secondary metabolite biosynthesis; terpenoid biosynthesis. Its function is as follows. Sesquiterpene synthase converting farnesyl diphosphate to nerolidol. Also has a monoterpene synthase activity, converting geranyl diphosphate into linalool as the major product. Has no diterpene synthase activity. This Selaginella moellendorffii (Spikemoss) protein is (3S,6E)-nerolidol synthase.